The sequence spans 938 residues: Isoleucine--tRNA ligase (938 aa).

The 'HIGH' region signature appears at 58 to 68 (PYANGSIHIGH). Position 561 (E561) interacts with L-isoleucyl-5'-AMP. The 'KMSKS' region motif lies at 602 to 606 (KMSKS). Position 605 (K605) interacts with ATP. Zn(2+)-binding residues include C901, C904, C921, and C924.

This sequence belongs to the class-I aminoacyl-tRNA synthetase family. IleS type 1 subfamily. As to quaternary structure, monomer. Zn(2+) serves as cofactor.

It localises to the cytoplasm. The enzyme catalyses tRNA(Ile) + L-isoleucine + ATP = L-isoleucyl-tRNA(Ile) + AMP + diphosphate. Functionally, catalyzes the attachment of isoleucine to tRNA(Ile). As IleRS can inadvertently accommodate and process structurally similar amino acids such as valine, to avoid such errors it has two additional distinct tRNA(Ile)-dependent editing activities. One activity is designated as 'pretransfer' editing and involves the hydrolysis of activated Val-AMP. The other activity is designated 'posttransfer' editing and involves deacylation of mischarged Val-tRNA(Ile). This Sodalis glossinidius (strain morsitans) protein is Isoleucine--tRNA ligase.